Here is a 424-residue protein sequence, read N- to C-terminus: Probable ribonuclease FAU-1 (424 aa).

It belongs to the FAU-1 family.

In terms of biological role, probable RNase involved in rRNA stability through maturation and/or degradation of precursor rRNAs. Binds to RNA in loop regions with AU-rich sequences. This chain is Probable ribonuclease FAU-1, found in Saccharolobus solfataricus (strain ATCC 35092 / DSM 1617 / JCM 11322 / P2) (Sulfolobus solfataricus).